The following is a 254-amino-acid chain: Ubiquinone biosynthesis O-methyltransferase (254 aa).

4 residues coordinate S-adenosyl-L-methionine: arginine 47, glycine 76, aspartate 97, and leucine 141.

Belongs to the methyltransferase superfamily. UbiG/COQ3 family.

It carries out the reaction a 3-demethylubiquinol + S-adenosyl-L-methionine = a ubiquinol + S-adenosyl-L-homocysteine + H(+). The catalysed reaction is a 3-(all-trans-polyprenyl)benzene-1,2-diol + S-adenosyl-L-methionine = a 2-methoxy-6-(all-trans-polyprenyl)phenol + S-adenosyl-L-homocysteine + H(+). It functions in the pathway cofactor biosynthesis; ubiquinone biosynthesis. Its function is as follows. O-methyltransferase that catalyzes the 2 O-methylation steps in the ubiquinone biosynthetic pathway. The protein is Ubiquinone biosynthesis O-methyltransferase of Maricaulis maris (strain MCS10) (Caulobacter maris).